A 299-amino-acid chain; its full sequence is Type II restriction enzyme BglI (299 aa).

Mg(2+) contacts are provided by D116, D142, and I143.

Homodimer. Mg(2+) is required as a cofactor.

The enzyme catalyses Endonucleolytic cleavage of DNA to give specific double-stranded fragments with terminal 5'-phosphates.. A P subtype restriction enzyme that recognizes the double-stranded sequence 5'-GCCNNNNNGGC-3' and cleaves before N-8. This Bacillus subtilis protein is Type II restriction enzyme BglI (bglIR).